A 362-amino-acid polypeptide reads, in one-letter code: Adenosine deaminase (362 aa).

Residues histidine 19 and histidine 21 each contribute to the Zn(2+) site. Histidine 21, aspartate 23, and glycine 181 together coordinate substrate. Position 208 (histidine 208) interacts with Zn(2+). Catalysis depends on glutamate 211, which acts as the Proton donor. Aspartate 300 lines the Zn(2+) pocket.

This sequence belongs to the metallo-dependent hydrolases superfamily. Adenosine and AMP deaminases family. Adenosine deaminase subfamily. Zn(2+) serves as cofactor.

The enzyme catalyses adenosine + H2O + H(+) = inosine + NH4(+). It carries out the reaction 2'-deoxyadenosine + H2O + H(+) = 2'-deoxyinosine + NH4(+). Functionally, catalyzes the hydrolytic deamination of adenosine and 2-deoxyadenosine. The protein is Adenosine deaminase of Mycobacteroides abscessus (strain ATCC 19977 / DSM 44196 / CCUG 20993 / CIP 104536 / JCM 13569 / NCTC 13031 / TMC 1543 / L948) (Mycobacterium abscessus).